Consider the following 375-residue polypeptide: Probable dipeptidase PepE (375 aa).

The next 2 helical transmembrane spans lie at 15–35 (LALAAAATADAGLAGLVITPG) and 55–75 (LVLPAAGAPAVVLPRLELAAL). Residues Asp-230, Asp-242, His-306, Glu-335, and Glu-349 each contribute to the Mn(2+) site.

Belongs to the peptidase M24B family. It depends on Mn(2+) as a cofactor.

It localises to the cell membrane. This chain is Probable dipeptidase PepE (pepE), found in Mycobacterium bovis (strain ATCC BAA-935 / AF2122/97).